The sequence spans 490 residues: Cytochrome P450 71B28 (490 aa).

Residues 1–21 traverse the membrane as a helical segment; the sequence is MSVFLCFLCLLPLILIFLKNL. Cys440 lines the heme pocket.

The protein belongs to the cytochrome P450 family. The cofactor is heme.

The protein resides in the membrane. This is Cytochrome P450 71B28 (CYP71B28) from Arabidopsis thaliana (Mouse-ear cress).